The chain runs to 355 residues: NADH-quinone oxidoreductase subunit H (355 aa).

Transmembrane regions (helical) follow at residues Val25–Trp45, Trp91–Ile111, Leu126–Ala146, Met170–Val190, Phe205–Ile225, Met253–Ala273, Phe290–Trp310, and Val330–Leu350.

This sequence belongs to the complex I subunit 1 family. As to quaternary structure, NDH-1 is composed of 14 different subunits. Subunits NuoA, H, J, K, L, M, N constitute the membrane sector of the complex.

It is found in the cell inner membrane. It catalyses the reaction a quinone + NADH + 5 H(+)(in) = a quinol + NAD(+) + 4 H(+)(out). Its function is as follows. NDH-1 shuttles electrons from NADH, via FMN and iron-sulfur (Fe-S) centers, to quinones in the respiratory chain. The immediate electron acceptor for the enzyme in this species is believed to be ubiquinone. Couples the redox reaction to proton translocation (for every two electrons transferred, four hydrogen ions are translocated across the cytoplasmic membrane), and thus conserves the redox energy in a proton gradient. This subunit may bind ubiquinone. This chain is NADH-quinone oxidoreductase subunit H, found in Burkholderia cenocepacia (strain HI2424).